We begin with the raw amino-acid sequence, 75 residues long: UPF0270 protein PST_1436 (75 aa).

This sequence belongs to the UPF0270 family.

The chain is UPF0270 protein PST_1436 from Stutzerimonas stutzeri (strain A1501) (Pseudomonas stutzeri).